The sequence spans 473 residues: Ion-translocating oxidoreductase complex subunit C (473 aa).

2 consecutive 4Fe-4S ferredoxin-type domains span residues 328–357 (KNES…QQLY) and 368–396 (TKKH…VKYF). [4Fe-4S] cluster is bound by residues C337, C340, C343, C347, C376, C379, C382, and C386.

Belongs to the 4Fe4S bacterial-type ferredoxin family. RnfC subfamily. In terms of assembly, the complex is composed of six subunits: RnfA, RnfB, RnfC, RnfD, RnfE and RnfG. [4Fe-4S] cluster is required as a cofactor.

The protein localises to the cell inner membrane. Part of a membrane-bound complex that couples electron transfer with translocation of ions across the membrane. The sequence is that of Ion-translocating oxidoreductase complex subunit C from Buchnera aphidicola subsp. Acyrthosiphon pisum (strain APS) (Acyrthosiphon pisum symbiotic bacterium).